Consider the following 427-residue polypeptide: Alpha/beta hydrolase gkaG (427 aa).

Residue aspartate 368 is part of the active site.

Belongs to the AB hydrolase superfamily. In terms of assembly, homodimer.

Its pathway is mycotoxin biosynthesis. In terms of biological role, alpha/beta hydrolase; part of the gene cluster that mediates the biosynthesis of GKK1032, fungal natural products containing a macrocyclic para-cyclophane connected to a decahydrofluorene ring system that show potent antitumor activities. Within the pathway, gkaG catalyzes the Knoevenagel condensation that affords the 3-pyrrolin-2-one ring, using as substrate the polyketide-tyrosyl acyl thioester product of gkaA. The pathway begins with the PKS-NRPS gkaA which, with the help of the trans-enoyl reductase gkaC, synthesizes the polyketide-tyrosyl acyl thioester product which can be reductively off-loaded by the terminal reductase (R) domain in gkaA. The alpha/beta hydrolase gkaG is then required to catalyze the subsequent Knoevenagel condensation that affords the 3-pyrrolin-2-one ring, whereas the three proteins gkaB, gkaX and gkaZ then function synergistically to form the cyclophane. This chain is Alpha/beta hydrolase gkaG, found in Penicillium citrinum.